Consider the following 98-residue polypeptide: Plastocyanin (98 aa).

Residues 1–98 (AQIVKLGGDD…AGMKMTITVQ (98 aa)) form the Plastocyanin-like domain. Residues histidine 38, cysteine 83, histidine 86, and methionine 91 each coordinate Cu(2+).

It belongs to the plastocyanin family. It depends on Cu(2+) as a cofactor.

The protein resides in the plastid. Its subcellular location is the chloroplast thylakoid membrane. Its function is as follows. Participates in electron transfer between P700 and the cytochrome b6-f complex in photosystem I. Has antiviral activity against Potato virus Y (strain N). The protein is Plastocyanin (PETE) of Ulva pertusa (Sea lettuce).